A 188-amino-acid polypeptide reads, in one-letter code: Elongation factor P (188 aa).

Belongs to the elongation factor P family.

The protein resides in the cytoplasm. It participates in protein biosynthesis; polypeptide chain elongation. In terms of biological role, involved in peptide bond synthesis. Stimulates efficient translation and peptide-bond synthesis on native or reconstituted 70S ribosomes in vitro. Probably functions indirectly by altering the affinity of the ribosome for aminoacyl-tRNA, thus increasing their reactivity as acceptors for peptidyl transferase. The chain is Elongation factor P from Leptospira borgpetersenii serovar Hardjo-bovis (strain JB197).